The chain runs to 233 residues: MSEAKNLLAQGLWKNNSALVQLLGLCPLLAVSSTATNALGLGLATTLVLVCTNTAVSALRRWVPSEIRIPIYVMIIASVVSTVQMLINAYAFGLYQSLGIFIPLIVTNCIVIGRAEAYAAKNPVGLSALDGFAMGMGATCALFVLGALREILGNGTLFDGADMLLGSWATVLRIDILHLDTPFLLAMLPPGAFIGLGLLLAGKYVIDEKMKARKANTRVSVPQLQDGDAEKAL.

Transmembrane regions (helical) follow at residues 18-38 (ALVQ…ATNA), 39-59 (LGLG…VSAL), 69-89 (IPIY…LINA), 92-112 (FGLY…CIVI), 128-148 (ALDG…LGAL), and 182-202 (PFLL…LLAG).

Belongs to the NqrDE/RnfAE family. As to quaternary structure, the complex is composed of six subunits: RnfA, RnfB, RnfC, RnfD, RnfE and RnfG.

The protein resides in the cell inner membrane. Part of a membrane-bound complex that couples electron transfer with translocation of ions across the membrane. This chain is Ion-translocating oxidoreductase complex subunit E, found in Yersinia pseudotuberculosis serotype O:1b (strain IP 31758).